A 704-amino-acid polypeptide reads, in one-letter code: MYCWGSGRIGHGSPLSDIKTPKPLYFNISNSEQVNIFSEEEETEVKGEKDIEFIDFCAGRAHSLAIDNKNRCWVFGENSSAEFGNNSLVYSKVPILNKQFENEKIVSVSCWNQSYAITDQGKVWEWGKSIDTLIPRLLKFQYPIKAIDCSLNNSIGVSHNGIAFIGFNFNNEPKPVDYFIENNIEIQSVACGVNHYLYLTNRGEVYSNGGGISTGHYDEFYNNNNNNNNNNNNNNNNNNNNNNNNNNEIKEKVVEKVVEEEEGEEQFNIIIPKKLKQLRNIIEISSGYYNSLALDGYQNQVYGWGENLNGQLGIEGIDYSTEPILIELPLVEIKHISSGAYHSAFVTNNGELIVMGGGLVVSDDIRMSVALGNGEGGFQTIQFKVDTTKDETIISENIKFNKPTSQLINFEIKDKNENNETKHTNKNKDNHDDDDESDHSDDDHHDDDDNDKDSQGINDKGILTEEEMLEFQYHFNELSHYDGARNQFSPQFIQSLKKNKIVIDKVSCGKFHTLATPSKIQLIAPIESLQQYCIKYISENIINNMETDTSFPDINTLPINTVLKIDSHLTLNRNHSDRSQRLMSYLKSSFKQNINNNNNNNNSTTVNSPKSTKYEWDQYLENYSKEFEANAIVTLNNIEILTKTKGFEISLETINAIINGFIEFSQYIEQTSTQVANSENENENEIEMKMKMKKNEMKMKMKMK.

2 RCC1 repeats span residues 1–48 (MYCW…VKGE) and 69–120 (KNRC…ITDQ). The segment at 221-246 (YNNNNNNNNNNNNNNNNNNNNNNNNN) is disordered. The span at 222 to 246 (NNNNNNNNNNNNNNNNNNNNNNNNN) shows a compositional bias: low complexity. One copy of the RCC1 3 repeat lies at 298–348 (QNQVYGWGENLNGQLGIEGIDYSTEPILIELPLVEIKHISSGAYHSAFVTN). Residues 412–431 (IKDKNENNETKHTNKNKDNH) are compositionally biased toward basic and acidic residues. The interval 412-458 (IKDKNENNETKHTNKNKDNHDDDDESDHSDDDHHDDDDNDKDSQGIN) is disordered. The segment covering 432–451 (DDDDESDHSDDDHHDDDDND) has biased composition (acidic residues). The stretch at 668-698 (IEQTSTQVANSENENENEIEMKMKMKKNEMK) forms a coiled coil.

The polypeptide is RCC1 domain-containing protein DDB_G0295713 (Dictyostelium discoideum (Social amoeba)).